We begin with the raw amino-acid sequence, 134 residues long: Holo-[acyl-carrier-protein] synthase (134 aa).

The Mg(2+) site is built by aspartate 8 and glutamate 57.

Belongs to the P-Pant transferase superfamily. AcpS family. The cofactor is Mg(2+).

The protein resides in the cytoplasm. It catalyses the reaction apo-[ACP] + CoA = holo-[ACP] + adenosine 3',5'-bisphosphate + H(+). Its function is as follows. Transfers the 4'-phosphopantetheine moiety from coenzyme A to a Ser of acyl-carrier-protein. The protein is Holo-[acyl-carrier-protein] synthase of Rhizobium leguminosarum bv. trifolii (strain WSM2304).